The chain runs to 917 residues: Calcium-activated chloride channel regulator 1 (917 aa).

Positions 1–21 are cleaved as a signal peptide; that stretch reads MGSFRSSLFILVLHLLEGAQS. Residues 46–199 form a metalloprotease domain region; sequence DERLIQNIKD…AIRGTNVLPQ (154 aa). Histidine 156 contributes to the Zn(2+) binding site. Glutamate 157 is an active-site residue. Zn(2+) contacts are provided by histidine 160 and asparagine 167. The region spanning 306–475 is the VWFA domain; the sequence is IVCLVLDKSG…NGLIDAFGAL (170 aa). N-linked (GlcNAc...) asparagine glycosylation is found at asparagine 503, asparagine 772, asparagine 806, asparagine 812, asparagine 838, and asparagine 893.

It belongs to the CLCR family. In terms of processing, glycosylated. Post-translationally, the translation product is autoproteolytically cleaved by the metalloprotease domain in the endoplasmic reticulum into a N-terminal and a C-terminal products that remain physically associated with each other. The cleavage is necessary for calcium-activated chloride channel (CaCC) activation activity. As to expression, expressed in ileum, trachea, and the major salivary glands. In ileum, expressed to the crypt and villus epithelia, whereas in trachea expressed in both surface epithelium and submucosal glands.

Its subcellular location is the secreted. It is found in the extracellular space. In terms of biological role, may be involved in mediating calcium-activated chloride conductance. May play critical roles in goblet cell metaplasia, mucus hypersecretion, cystic fibrosis and AHR. May be involved in the regulation of mucus production and/or secretion by goblet cells. Involved in the regulation of tissue inflammation in the innate immune response. May play a role as a tumor suppressor. Induces MUC5AC. Induces a cAMP-dependent chloride conductance possibly through effects on CFTR in colon carcinoma cells. The chain is Calcium-activated chloride channel regulator 1 (CLCA1) from Sus scrofa (Pig).